Reading from the N-terminus, the 178-residue chain is Translation initiation factor IF-3 (178 aa).

The segment at 1–20 is disordered; sequence MRRPFRATPVQKDGPRSNRD.

This sequence belongs to the IF-3 family. In terms of assembly, monomer.

It is found in the cytoplasm. Its function is as follows. IF-3 binds to the 30S ribosomal subunit and shifts the equilibrium between 70S ribosomes and their 50S and 30S subunits in favor of the free subunits, thus enhancing the availability of 30S subunits on which protein synthesis initiation begins. The chain is Translation initiation factor IF-3 from Brucella abortus biovar 1 (strain 9-941).